Reading from the N-terminus, the 488-residue chain is NADH-quinone oxidoreductase subunit N 2 (488 aa).

Helical transmembrane passes span 18–38 (FLPEFILLLLAFILFTLELFI), 45–65 (LVLNVVSYVGYFSVLMSLLIP), 81–101 (PLAVTVKIFAVLITLAILPFA), 110–130 (SFYGEFYYILAFTLLGVFVLA), 135–155 (LIILYVALELVSVGFYILTAL), 169–189 (YLILGGLSIALASYGAAFMYI), 210–230 (LVLGLVFFLIGLAVKIGAVPF), 242–262 (PTPVTALMASVGKLAFFIPLV), 274–294 (LVWTITVGVIAALTMLYGNLV), 308–328 (SSIAHSGYIMAGAAVAKVIGM), 331–351 (VIYFLVAYAVMSAGAFLVLAL), 375–395 (IAFAFFVYMVALLGVPPTVGF), 412–434 (WLAFIMILSAAISTGYYIRLVVV), and 458–478 (FALTLASVLLGVLPSLVWFLI).

It belongs to the complex I subunit 2 family. In terms of assembly, NDH-1 is composed of 14 different subunits. Subunits NuoA, H, J, K, L, M, N constitute the membrane sector of the complex.

It is found in the cell inner membrane. The enzyme catalyses a quinone + NADH + 5 H(+)(in) = a quinol + NAD(+) + 4 H(+)(out). Its function is as follows. NDH-1 shuttles electrons from NADH, via FMN and iron-sulfur (Fe-S) centers, to quinones in the respiratory chain. The immediate electron acceptor for the enzyme in this species is believed to be ubiquinone. Couples the redox reaction to proton translocation (for every two electrons transferred, four hydrogen ions are translocated across the cytoplasmic membrane), and thus conserves the redox energy in a proton gradient. This is NADH-quinone oxidoreductase subunit N 2 from Aquifex aeolicus (strain VF5).